Reading from the N-terminus, the 430-residue chain is Argininosuccinate lyase (430 aa).

The protein belongs to the lyase 1 family. Argininosuccinate lyase subfamily.

Its subcellular location is the cytoplasm. It carries out the reaction 2-(N(omega)-L-arginino)succinate = fumarate + L-arginine. It participates in amino-acid biosynthesis; L-arginine biosynthesis; L-arginine from L-ornithine and carbamoyl phosphate: step 3/3. This chain is Argininosuccinate lyase, found in Sorangium cellulosum (strain So ce56) (Polyangium cellulosum (strain So ce56)).